Reading from the N-terminus, the 98-residue chain is Co-chaperonin GroES (98 aa).

It belongs to the GroES chaperonin family. In terms of assembly, heptamer of 7 subunits arranged in a ring. Interacts with the chaperonin GroEL.

It is found in the cytoplasm. Functionally, together with the chaperonin GroEL, plays an essential role in assisting protein folding. The GroEL-GroES system forms a nano-cage that allows encapsulation of the non-native substrate proteins and provides a physical environment optimized to promote and accelerate protein folding. GroES binds to the apical surface of the GroEL ring, thereby capping the opening of the GroEL channel. In Bartonella bacilliformis (strain ATCC 35685 / KC583 / Herrer 020/F12,63), this protein is Co-chaperonin GroES.